The chain runs to 232 residues: 7-cyano-7-deazaguanine synthase (232 aa).

8–18 (FSGGQDSTTCL) is a binding site for ATP. Residues C187, C196, C199, and C202 each coordinate Zn(2+).

It belongs to the QueC family. Zn(2+) serves as cofactor.

It carries out the reaction 7-carboxy-7-deazaguanine + NH4(+) + ATP = 7-cyano-7-deazaguanine + ADP + phosphate + H2O + H(+). It participates in purine metabolism; 7-cyano-7-deazaguanine biosynthesis. Its function is as follows. Catalyzes the ATP-dependent conversion of 7-carboxy-7-deazaguanine (CDG) to 7-cyano-7-deazaguanine (preQ(0)). The sequence is that of 7-cyano-7-deazaguanine synthase from Vibrio vulnificus (strain YJ016).